A 227-amino-acid polypeptide reads, in one-letter code: Adenylate kinase (227 aa).

Glycine 21 to threonine 26 contributes to the ATP binding site. The interval alanine 41 to valine 70 is NMP. AMP contacts are provided by residues threonine 42, arginine 47, lysine 68–valine 70, glycine 97–arginine 100, and glutamine 104. The interval glycine 138–aspartate 175 is LID. ATP-binding positions include arginine 139 and serine 148–tyrosine 149. AMP is bound by residues arginine 172 and arginine 183. ATP is bound at residue glutamine 211.

Belongs to the adenylate kinase family. AK2 subfamily. Monomer.

It is found in the cytoplasm. Its subcellular location is the cytosol. It localises to the mitochondrion intermembrane space. It catalyses the reaction AMP + ATP = 2 ADP. Its function is as follows. Catalyzes the reversible transfer of the terminal phosphate group between ATP and AMP. Plays an important role in cellular energy homeostasis and in adenine nucleotide metabolism. Adenylate kinase activity is critical for regulation of the phosphate utilization and the AMP de novo biosynthesis pathways. In Kluyveromyces lactis (strain ATCC 8585 / CBS 2359 / DSM 70799 / NBRC 1267 / NRRL Y-1140 / WM37) (Yeast), this protein is Adenylate kinase.